Here is a 214-residue protein sequence, read N- to C-terminus: Large ribosomal subunit protein uL1 (214 aa).

This sequence belongs to the universal ribosomal protein uL1 family. As to quaternary structure, component of the large ribosomal subunit.

The protein resides in the cytoplasm. Its function is as follows. Component of the large ribosomal subunit. The ribosome is a large ribonucleoprotein complex responsible for the synthesis of proteins in the cell. The protein is Large ribosomal subunit protein uL1 (RPL10A) of Entamoeba histolytica (strain ATCC 30459 / HM-1:IMSS / ABRM).